Here is a 258-residue protein sequence, read N- to C-terminus: Alpha- and beta-fibrinogenase stejnefibrase-1 (258 aa).

The first 18 residues, 1–18, serve as a signal peptide directing secretion; the sequence is MELIRVLANLLILQLSYA. A propeptide spanning residues 19–24 is cleaved from the precursor; the sequence is QKSSEL. In terms of domain architecture, Peptidase S1 spans 25 to 249; the sequence is IIGGDECNID…HLDWIQNIIA (225 aa). 6 disulfide bridges follow: C31–C163, C50–C66, C98–C256, C142–C210, C174–C189, and C200–C225. H65 serves as the catalytic Charge relay system. N-linked (GlcNAc...) asparagine glycosylation occurs at N103. D110 functions as the Charge relay system in the catalytic mechanism. N-linked (GlcNAc...) asparagine glycans are attached at residues N121, N122, N154, and N170. S204 functions as the Charge relay system in the catalytic mechanism.

The protein belongs to the peptidase S1 family. Snake venom subfamily. In terms of assembly, monomer. As to expression, expressed by the venom gland.

It is found in the secreted. With respect to regulation, its activity is inhibited by PMSF and p-nitrophenyl-p-guanidinobenzoate (NPGB). Snake venom serine protease. Degrades concomitantly alpha- (FGA) and beta-chains of fibrinogen (FGB). The protein is Alpha- and beta-fibrinogenase stejnefibrase-1 of Trimeresurus stejnegeri (Chinese green tree viper).